The sequence spans 95 residues: Small ribosomal subunit protein bS6 (95 aa).

It belongs to the bacterial ribosomal protein bS6 family.

Binds together with bS18 to 16S ribosomal RNA. The polypeptide is Small ribosomal subunit protein bS6 (Onion yellows phytoplasma (strain OY-M)).